Reading from the N-terminus, the 1058-residue chain is UPF0507 protein YALI0E18612g (1058 aa).

One can recognise a VPS9 domain in the interval 252-394; it reads TNEDGPLDQA…IGENREQLEA (143 aa).

The protein belongs to the UPF0507 family.

This is UPF0507 protein YALI0E18612g from Yarrowia lipolytica (strain CLIB 122 / E 150) (Yeast).